A 205-amino-acid polypeptide reads, in one-letter code: Holliday junction branch migration complex subunit RuvA (205 aa).

The domain I stretch occupies residues 1–64 (MIGRLRGLLV…EDAQLLYGFI (64 aa)). The segment at 65-143 (TKQERALFRL…SLMEASHGNE (79 aa)) is domain II. Residues 144–156 (REFVLQSNYTPAP) are flexible linker. The tract at residues 157–205 (VVNTAEEDAISALLALGYKPAQASKAVSSVFEEGMDSETLIKASLKSML) is domain III.

The protein belongs to the RuvA family. As to quaternary structure, homotetramer. Forms an RuvA(8)-RuvB(12)-Holliday junction (HJ) complex. HJ DNA is sandwiched between 2 RuvA tetramers; dsDNA enters through RuvA and exits via RuvB. An RuvB hexamer assembles on each DNA strand where it exits the tetramer. Each RuvB hexamer is contacted by two RuvA subunits (via domain III) on 2 adjacent RuvB subunits; this complex drives branch migration. In the full resolvosome a probable DNA-RuvA(4)-RuvB(12)-RuvC(2) complex forms which resolves the HJ.

It is found in the cytoplasm. In terms of biological role, the RuvA-RuvB-RuvC complex processes Holliday junction (HJ) DNA during genetic recombination and DNA repair, while the RuvA-RuvB complex plays an important role in the rescue of blocked DNA replication forks via replication fork reversal (RFR). RuvA specifically binds to HJ cruciform DNA, conferring on it an open structure. The RuvB hexamer acts as an ATP-dependent pump, pulling dsDNA into and through the RuvAB complex. HJ branch migration allows RuvC to scan DNA until it finds its consensus sequence, where it cleaves and resolves the cruciform DNA. In Shewanella loihica (strain ATCC BAA-1088 / PV-4), this protein is Holliday junction branch migration complex subunit RuvA.